Here is a 68-residue protein sequence, read N- to C-terminus: UPF0352 protein CPS_2611 (68 aa).

It belongs to the UPF0352 family.

The chain is UPF0352 protein CPS_2611 from Colwellia psychrerythraea (strain 34H / ATCC BAA-681) (Vibrio psychroerythus).